We begin with the raw amino-acid sequence, 435 residues long: Cyclic GMP-AMP synthase-like receptor (435 aa).

ATP is bound by residues Ser-70 and 82–84; that span reads EFD. The Mg(2+) site is built by Glu-82, Asp-84, and Asp-209. Asp-209 contacts GTP. ATP is bound by residues Lys-286 and 300-304; that span reads SYYVK. Residues Leu-311, Asp-312, and Asp-317 each contribute to the Mn(2+) site.

This sequence belongs to the mab-21 family. The cofactor is Mg(2+). Mn(2+) serves as cofactor.

It carries out the reaction GTP + ATP = 2',3'-cGAMP + 2 diphosphate. The catalysed reaction is GTP + ATP = pppGp(2'-5')A + diphosphate. It catalyses the reaction pppGp(2'-5')A = 2',3'-cGAMP + diphosphate. In terms of biological role, nucleotidyltransferase that catalyzes the formation of cyclic GMP-AMP (2',3'-cGAMP) from ATP and GTP and plays a key role in innate immunity. Directly binds some unknown ligand, activating the nucleotidyltransferase activity, leading to synthesis of 2',3'-cGAMP, a second messenger that binds to and activates Sting, thereby triggering the immune response via activation of the NF-kappa-B transcription factor. This chain is Cyclic GMP-AMP synthase-like receptor, found in Ctenocephalides felis (Cat flea).